The sequence spans 404 residues: Zinc finger CCCH domain-containing protein 15 homolog (404 aa).

The segment covering 1 to 10 (MPPKKAPPGP) has biased composition (pro residues). The interval 1-71 (MPPKKAPPGP…KRKEEKEKKL (71 aa)) is disordered. Basic and acidic residues predominate over residues 12–28 (KKTEQKKKEKVIEDKTF). Low complexity predominate over residues 38–50 (QQKFIQQVQKQVQ). A compositionally biased stretch (basic and acidic residues) spans 56–71 (PRQDGDKRKEEKEKKL). 2 consecutive C3H1-type zinc fingers follow at residues 94–121 (DPKS…HDLS) and 165–202 (PTTD…HALP). T218 carries the post-translational modification Phosphothreonine. Residue S221 is modified to Phosphoserine. Residues 246–270 (LAWKKRKIAEKKAKLAAEEERKKSD) are a coiled coil. Low complexity-rich tracts occupy residues 352-361 (EAAKTAAAED) and 369-380 (PSSSAPANDAAP). The interval 352 to 380 (EAAKTAAAEDAAADEDGPSSSAPANDAAP) is disordered.

The protein belongs to the ZC3H15/TMA46 family.

This is Zinc finger CCCH domain-containing protein 15 homolog from Drosophila melanogaster (Fruit fly).